The primary structure comprises 367 residues: Pyrimidine monooxygenase RutA (367 aa).

Residues 49 to 50 (IK), asparagine 115, glutamate 124, 140 to 141 (RY), and serine 190 contribute to the FMN site.

This sequence belongs to the NtaA/SnaA/DszA monooxygenase family. RutA subfamily.

The enzyme catalyses uracil + FMNH2 + NADH + O2 = (Z)-3-ureidoacrylate + FMN + NAD(+) + H2O + H(+). The catalysed reaction is thymine + FMNH2 + NADH + O2 = (Z)-2-methylureidoacrylate + FMN + NAD(+) + H2O + H(+). Catalyzes the pyrimidine ring opening between N-3 and C-4 by an unusual flavin hydroperoxide-catalyzed mechanism, adding oxygen atoms in the process to yield ureidoacrylate peracid, that immediately reacts with FMN forming ureidoacrylate and FMN-N(5)-oxide. The FMN-N(5)-oxide reacts spontaneously with NADH to produce FMN. Requires the flavin reductase RutF to regenerate FMN in vivo. This Yersinia enterocolitica serotype O:8 / biotype 1B (strain NCTC 13174 / 8081) protein is Pyrimidine monooxygenase RutA.